The sequence spans 873 residues: DNA mismatch repair protein MutS (873 aa).

628 to 635 serves as a coordination point for ATP; sequence GPNMAGKS.

The protein belongs to the DNA mismatch repair MutS family.

Functionally, this protein is involved in the repair of mismatches in DNA. It is possible that it carries out the mismatch recognition step. This protein has a weak ATPase activity. The polypeptide is DNA mismatch repair protein MutS (Chlorobium chlorochromatii (strain CaD3)).